A 535-amino-acid polypeptide reads, in one-letter code: Probable monogalactosyldiacylglycerol synthase, chloroplastic (535 aa).

The transit peptide at 1–113 (MMQHSSSVTQ…KIPLGFASVG (113 aa)) directs the protein to the chloroplast.

This sequence belongs to the glycosyltransferase 28 family.

It localises to the plastid. The protein localises to the chloroplast membrane. The enzyme catalyses a 1,2-diacyl-sn-glycerol + UDP-alpha-D-galactose = a 1,2-diacyl-3-O-(beta-D-galactosyl)-sn-glycerol + UDP + H(+). In terms of biological role, involved in the synthesis of the major structural component of photosynthetic membranes. This is Probable monogalactosyldiacylglycerol synthase, chloroplastic (MGD A) from Nicotiana tabacum (Common tobacco).